Here is a 937-residue protein sequence, read N- to C-terminus: Translation initiation factor IF-2 (937 aa).

Disordered stretches follow at residues 61–156 and 171–274; these read IQAN…KAKQ and LTQS…SHKI. Over residues 179-196 the composition is skewed to basic and acidic residues; it reads AKKEISEVKKQEQEIKRH. Positions 197 to 208 are enriched in basic residues; sequence ENIKRRTGFRVI. A compositionally biased stretch (basic and acidic residues) spans 237 to 252; that stretch reads EDIKKEWQEKDKQEAK. A tr-type G domain is found at 436-605; that stretch reads ERPPVVTIMG…LIQADIMELK (170 aa). Residues 445–452 form a G1 region; the sequence is GHVDHGKT. Residue 445-452 coordinates GTP; that stretch reads GHVDHGKT. Positions 470 to 474 are G2; sequence GITQH. A G3 region spans residues 491-494; the sequence is DTPG. Residues 491-495 and 545-548 contribute to the GTP site; these read DTPGH and NKMD. The segment at 545–548 is G4; that stretch reads NKMD. The G5 stretch occupies residues 581–583; that stretch reads SAK.

Belongs to the TRAFAC class translation factor GTPase superfamily. Classic translation factor GTPase family. IF-2 subfamily.

The protein localises to the cytoplasm. One of the essential components for the initiation of protein synthesis. Protects formylmethionyl-tRNA from spontaneous hydrolysis and promotes its binding to the 30S ribosomal subunits. Also involved in the hydrolysis of GTP during the formation of the 70S ribosomal complex. This is Translation initiation factor IF-2 from Helicobacter pylori (strain G27).